The sequence spans 170 residues: Cathelicidin antimicrobial peptide (170 aa).

The signal sequence occupies residues 1–30 (MKTQRDGPSLGRWSLVLLLLGLTMPLAVIA). Residues 31 to 131 (RVLSYQEAVL…DISCDKDKRK (101 aa)) constitute a propeptide, cathelin-like domain (CLD). 2 disulfides stabilise this stretch: Cys-86–Cys-97 and Cys-108–Cys-125. The tract at residues 150–162 (LKNIGQRIKDFFG) is active core.

The protein belongs to the cathelicidin family. As to quaternary structure, monomer, homodimer or homotrimer (in vitro). Oligomerizes as tetra- or hexamer in solution (in vitro). Proteolytically cleaved by proteinase PRTN3 into antibacterial peptide LL-37. Proteolytically cleaved by cathepsin CTSG and neutrophil elastase ELANE. In terms of processing, resistant to proteolytic degradation in solution, and when bound to both zwitterionic (mimicking mammalian membranes) and negatively charged membranes (mimicking bacterial membranes). Post-translationally, after secretion onto the skin surface, the CAMP gene product is processed by a serine protease-dependent mechanism into multiple novel antimicrobial peptides distinct from and shorter than cathelicidin LL-37. These peptides show enhanced antimicrobial action, acquiring the ability to kill skin pathogens such as S.aureus, E.coli and C.albicans. These peptides have lost the ability to stimulate CXCL8/IL8 release from keratinocytes. The peptides act synergistically, killing bacteria at lower concentrations when present together, and maintain activity at increased salt condition.

The protein resides in the secreted. It is found in the vesicle. Antimicrobial protein that is an integral component of the innate immune system. Binds to bacterial lipopolysaccharides (LPS). Acts via neutrophil N-formyl peptide receptors to enhance the release of CXCL2. Postsecretory processing generates multiple cathelicidin antimicrobial peptides with various lengths which act as a topical antimicrobial defense in sweat on skin. The unprocessed precursor form, cathelicidin antimicrobial peptide, inhibits the growth of Gram-negative E.coli and E.aerogenes with efficiencies comparable to that of the mature peptide LL-37 (in vitro). Functionally, antimicrobial peptide that is an integral component of the innate immune system. Binds to bacterial lipopolysaccharides (LPS). Causes membrane permeabilization by forming transmembrane pores (in vitro). Causes lysis of E.coli. Exhibits antimicrobial activity against Gram-negative bacteria such as P.aeruginosa, S.typhimurium, E.aerogenes, E.coli and P.syringae, Gram-positive bacteria such as L.monocytogenes, S.epidermidis, S.pyogenes and S.aureus, as well as vancomycin-resistant enterococci (in vitro). Exhibits antimicrobial activity against methicillin-resistant S.aureus, P.mirabilis, and C.albicans in low-salt media, but not in media containing 100 mM NaCl (in vitro). Forms chiral supramolecular assemblies with quinolone signal (PQS) molecules of P.aeruginosa, which may lead to interference of bacterial quorum signaling and perturbance of bacterial biofilm formation. May form supramolecular fiber-like assemblies on bacterial membranes. Induces cytokine and chemokine producation as well as TNF/TNFA and CSF2/GMCSF production in normal human keratinocytes. Exhibits hemolytic activity against red blood cells. Its function is as follows. Exhibits antimicrobial activity against E.coli and B.megaterium (in vitro). This Ateles fusciceps robustus (Colombian black-faced spider monkey) protein is Cathelicidin antimicrobial peptide.